The chain runs to 428 residues: Serine--tRNA ligase (428 aa).

235 to 237 (TAE) contacts L-serine. Residue 266 to 268 (RSE) participates in ATP binding. Residue Glu289 participates in L-serine binding. Residue 353 to 356 (EISS) participates in ATP binding. Ser389 contributes to the L-serine binding site.

It belongs to the class-II aminoacyl-tRNA synthetase family. Type-1 seryl-tRNA synthetase subfamily. Homodimer. The tRNA molecule binds across the dimer.

It is found in the cytoplasm. The catalysed reaction is tRNA(Ser) + L-serine + ATP = L-seryl-tRNA(Ser) + AMP + diphosphate + H(+). It carries out the reaction tRNA(Sec) + L-serine + ATP = L-seryl-tRNA(Sec) + AMP + diphosphate + H(+). It participates in aminoacyl-tRNA biosynthesis; selenocysteinyl-tRNA(Sec) biosynthesis; L-seryl-tRNA(Sec) from L-serine and tRNA(Sec): step 1/1. Catalyzes the attachment of serine to tRNA(Ser). Is also able to aminoacylate tRNA(Sec) with serine, to form the misacylated tRNA L-seryl-tRNA(Sec), which will be further converted into selenocysteinyl-tRNA(Sec). The chain is Serine--tRNA ligase from Shewanella piezotolerans (strain WP3 / JCM 13877).